Here is a 295-residue protein sequence, read N- to C-terminus: sn-glycerol-3-phosphate transport system permease protein UgpA (295 aa).

Topologically, residues 1–11 (MSSSRPVFRSR) are cytoplasmic. A helical transmembrane segment spans residues 12–32 (WLPYLLVAPQLVITVIFFIWP). The Periplasmic segment spans residues 33-80 (AGEALWYSLQSVDPFGFSSQFVGLENFVALFHDSYYLDAFWTTIKFSA). Positions 76–284 (IKFSALVTFS…FLVIILTVVQ (209 aa)) constitute an ABC transmembrane type-1 domain. Residues 81 to 101 (LVTFSGLLVSLFFAALVDYVV) traverse the membrane as a helical segment. Residues 102–109 (RGSRFYQT) lie on the Cytoplasmic side of the membrane. The helical transmembrane segment at 110–130 (LMLLPYAVAPAVAAVLWIFLF) threads the bilayer. At 131–157 (NPGRGLITHFLGEFGYDWNHAQNSGQA) the chain is on the periplasmic side. Residues 158–178 (MFLVVFASVWKQISYNFLFFF) form a helical membrane-spanning segment. The Cytoplasmic segment spans residues 179–207 (AALQSIPRSLVEAAAIDGAGPIRRFFRLS). A helical transmembrane segment spans residues 208 to 228 (LPLIAPVSFFLLVVNLVYAFF). Residues 229-262 (DTFPVIDAATAGGPVQATTTLIYKIYREGFTGLD) lie on the Periplasmic side of the membrane. The chain crosses the membrane as a helical span at residues 263-283 (LSASAAQSVVLMFLVIILTVV). Residues 284 to 295 (QFRYVESKVRYQ) lie on the Cytoplasmic side of the membrane.

It belongs to the binding-protein-dependent transport system permease family. UgpAE subfamily. In terms of assembly, the complex is composed of two ATP-binding proteins (UgpC), two transmembrane proteins (UgpA and UgpE) and a solute-binding protein (UgpB).

It localises to the cell inner membrane. Its function is as follows. Part of the ABC transporter complex UgpBAEC involved in sn-glycerol-3-phosphate (G3P) import. Probably responsible for the translocation of the substrate across the membrane. This is sn-glycerol-3-phosphate transport system permease protein UgpA (ugpA) from Salmonella typhimurium (strain LT2 / SGSC1412 / ATCC 700720).